We begin with the raw amino-acid sequence, 582 residues long: MLKPPIITSNDNNNTKVAENLNDLNNKGKMSGQQIESFSPWHAQTSSSAVTGTSELFGSTYAMLSDHSVYPEQWSGKQLSQSVLFEQPQIQPLVGNSYDPPVRFDPPYAYRATATGYMPTVPGLSTNSSPYYPRTSGYAAGQQFYAPSLSGVPNTQQLILAAQVAQASNVQQQLQQQVLRPEPLRPATQKSTNGVHRSTSNSSAETLRNNSVSAATVSPSDDNSLNSPALTSSGSAGSGTPPLGIDLNNTDLESGDEERVMCMACRGVYPSRRSLTGHIGRNEKCREIIGRNYLDALAQGVNPPIPGTDAAIKSGAITTGADGMSPVCPFCDRFISHYKGNIRRHINQCRKSAEPMKRHRVEAHEKQSPKKKVKKEQNEMYQHEYNDHDSSSMSGGMMNSPKISPPSSSFYGANSSDLCSPGEYSNSAYEPYPTPMLENTERTSTETAVLQDAYICEDCDFVTVYKGNMKRHLNTCHPQPEFKSLKEWDQKLEGMRASNLGISGDRLQERLAAHKANSSRGRKPRKKKENNTEESESIDFKNILNSETGALLESLASSSSSMGGYSNGNNFQPPPPPPPMLL.

Disordered stretches follow at residues 179 to 251 and 352 to 377; these read LRPE…NNTD and SAEPMKRHRVEAHEKQSPKKKVKKEQ. Residues 188 to 226 show a composition bias toward polar residues; sequence TQKSTNGVHRSTSNSSAETLRNNSVSAATVSPSDDNSLN. A compositionally biased stretch (low complexity) spans 227–244; that stretch reads SPALTSSGSAGSGTPPLG. The span at 352-368 shows a compositional bias: basic and acidic residues; that stretch reads SAEPMKRHRVEAHEKQS. The C2H2-type; Degenerate zinc finger occupies 454 to 477; that stretch reads YICEDCDFVTVYKGNMKRHLNTCH. A disordered region spans residues 513–582; sequence AHKANSSRGR…PPPPPPPMLL (70 aa). Residues 551–570 show a composition bias toward low complexity; the sequence is LLESLASSSSSMGGYSNGNN. Residues 572–582 are compositionally biased toward pro residues; it reads QPPPPPPPMLL.

As to quaternary structure, may interact with swsn-9; the interaction promotes hypodermal differentiation. In terms of tissue distribution, expressed in hypodermal seam cells, the somatic gonad and vulval precursor cells, body wall muscle and head neurons.

The protein resides in the nucleus. Functionally, DNA-binding protein which binds to the promoters of let-60, lin-14 and lin-28, possibly to regulate genes involved in hypodermal and vulval development. Together with miRNAs mir-84 and let-7 may direct terminal differentiation of the seam cells, exit from the molting cycle, and vulva formation. Does not regulate the expression of mir-84. May promote hypodermal differentiation in association with swsn-9, a component of SWI/SNF chromatin remodeling complexes. In Caenorhabditis elegans, this protein is Zinc finger protein somi-1.